Consider the following 356-residue polypeptide: Probable cysteine protease RDL6 (356 aa).

The first 26 residues, M1–A26, serve as a signal peptide directing secretion. Positions M27–Q132 are cleaved as a propeptide — activation peptide. Residues N37 and N86 are each glycosylated (N-linked (GlcNAc...) asparagine). 3 disulfides stabilise this stretch: C154/C195, C188/C229, and C288/C339. C157 is a catalytic residue. Active-site residues include H294 and N314.

Belongs to the peptidase C1 family.

In terms of biological role, probable thiol protease. This chain is Probable cysteine protease RDL6, found in Arabidopsis thaliana (Mouse-ear cress).